We begin with the raw amino-acid sequence, 172 residues long: Fimbrial-like protein FimF (172 aa).

Positions 1–21 are cleaved as a signal peptide; it reads MILRRVFIAIGCVLFSPLSQA. A disulfide bridge links Cys41 with Cys81.

It belongs to the fimbrial protein family.

The protein resides in the fimbrium. The sequence is that of Fimbrial-like protein FimF (fimF) from Salmonella typhimurium (strain LT2 / SGSC1412 / ATCC 700720).